The sequence spans 371 residues: DNA replication and repair protein RecF (371 aa).

ATP is bound at residue Gly-30 to Thr-37.

Belongs to the RecF family.

It is found in the cytoplasm. In terms of biological role, the RecF protein is involved in DNA metabolism; it is required for DNA replication and normal SOS inducibility. RecF binds preferentially to single-stranded, linear DNA. It also seems to bind ATP. This chain is DNA replication and repair protein RecF, found in Staphylococcus haemolyticus (strain JCSC1435).